We begin with the raw amino-acid sequence, 393 residues long: NAD(P)H-quinone oxidoreductase subunit H, chloroplastic (393 aa).

Belongs to the complex I 49 kDa subunit family. In terms of assembly, NDH is composed of at least 16 different subunits, 5 of which are encoded in the nucleus.

The protein resides in the plastid. It is found in the chloroplast thylakoid membrane. The enzyme catalyses a plastoquinone + NADH + (n+1) H(+)(in) = a plastoquinol + NAD(+) + n H(+)(out). The catalysed reaction is a plastoquinone + NADPH + (n+1) H(+)(in) = a plastoquinol + NADP(+) + n H(+)(out). Its function is as follows. NDH shuttles electrons from NAD(P)H:plastoquinone, via FMN and iron-sulfur (Fe-S) centers, to quinones in the photosynthetic chain and possibly in a chloroplast respiratory chain. The immediate electron acceptor for the enzyme in this species is believed to be plastoquinone. Couples the redox reaction to proton translocation, and thus conserves the redox energy in a proton gradient. This Barbarea verna (Land cress) protein is NAD(P)H-quinone oxidoreductase subunit H, chloroplastic.